The sequence spans 253 residues: Ribonuclease 3 (253 aa).

The region spanning 29 to 157 (VDELQKTIGH…MLGAVFLDAG (129 aa)) is the RNase III domain. Position 70 (glutamate 70) interacts with Mg(2+). Aspartate 74 is an active-site residue. Positions 143 and 146 each coordinate Mg(2+). Glutamate 146 is a catalytic residue. The DRBM domain maps to 184–253 (DYKSQLQELT…AARAVATLDK (70 aa)).

It belongs to the ribonuclease III family. Homodimer. The cofactor is Mg(2+).

It localises to the cytoplasm. The enzyme catalyses Endonucleolytic cleavage to 5'-phosphomonoester.. Functionally, digests double-stranded RNA. Involved in the processing of primary rRNA transcript to yield the immediate precursors to the large and small rRNAs (23S and 16S). Processes some mRNAs, and tRNAs when they are encoded in the rRNA operon. Processes pre-crRNA and tracrRNA of type II CRISPR loci if present in the organism. The polypeptide is Ribonuclease 3 (Nitratidesulfovibrio vulgaris (strain ATCC 29579 / DSM 644 / CCUG 34227 / NCIMB 8303 / VKM B-1760 / Hildenborough) (Desulfovibrio vulgaris)).